Reading from the N-terminus, the 171-residue chain is Shikimate kinase (171 aa).

14–19 (GAGKST) lines the ATP pocket. A Mg(2+)-binding site is contributed by S18. Substrate contacts are provided by D36, R60, and G82. R120 is an ATP binding site. Substrate is bound at residue R139. Q156 serves as a coordination point for ATP.

Belongs to the shikimate kinase family. As to quaternary structure, monomer. It depends on Mg(2+) as a cofactor.

It localises to the cytoplasm. It catalyses the reaction shikimate + ATP = 3-phosphoshikimate + ADP + H(+). It functions in the pathway metabolic intermediate biosynthesis; chorismate biosynthesis; chorismate from D-erythrose 4-phosphate and phosphoenolpyruvate: step 5/7. Catalyzes the specific phosphorylation of the 3-hydroxyl group of shikimic acid using ATP as a cosubstrate. The chain is Shikimate kinase from Shewanella loihica (strain ATCC BAA-1088 / PV-4).